Reading from the N-terminus, the 82-residue chain is RNA-binding protein GTNG_0100 (82 aa).

Belongs to the eukaryotic ribosomal protein eL8 family.

The sequence is that of RNA-binding protein GTNG_0100 from Geobacillus thermodenitrificans (strain NG80-2).